The chain runs to 397 residues: MAQSPPPQSLLGHDHWIFAQGWGWAGHWDSTSPASSSDSSGSCPCDGARGLPQPQPPSCSSRAAEAAATTPRRARTGPAGGQRQSASEREKLRMRTLARALHELRRFLPPSLAPAGQSLTKIETLRLAIRYIGHLSAVLGLSEESLQCRRRQRGDAGSPWGCPLCPDRGPAEAQTQAEGQGQGQGQGQGQGQGQGQGQGQGQGQGRRPGLVSAVLAEASWGSPSACPGAQAAPERLGRGVHDTDPWATPPYCPKIQSPPYSSQGTTSDASLWTPPQGCPWTQSSPEPRNPPVPWTAAPATLELAAVYQGLSVSPEPCLSLGAPSLLPHPSCQRLQPQTPGRCWSHSAEVVPNSEDQGPGAAFQLSEASPPQSSGLRFSGCPELWQEDLEGARLGIFY.

4 disordered regions span residues 28–92 (WDST…REKL), 152–208 (QRGD…GRRP), 222–295 (SPSA…VPWT), and 351–376 (PNSEDQGPGAAFQLSEASPPQSSGLR). Composition is skewed to low complexity over residues 32-48 (SPASSSDSSGSCPCDGA) and 58-71 (SCSSRAAEAAATTP). Residues 81 to 135 (GQRQSASEREKLRMRTLARALHELRRFLPPSLAPAGQSLTKIETLRLAIRYIGHL) form the bHLH domain. Repeat copies occupy residues 179–180 (GQ), 181–182 (GQ), 183–184 (GQ), 185–186 (GQ), 187–188 (GQ), 189–190 (GQ), 191–192 (GQ), 193–194 (GQ), 195–196 (GQ), 197–198 (GQ), 199–200 (GQ), 201–202 (GQ), and 203–204 (GQ). The 13 X 2 AA tandem repeats of G-Q stretch occupies residues 179-204 (GQGQGQGQGQGQGQGQGQGQGQGQGQ). A compositionally biased stretch (gly residues) spans 180–206 (QGQGQGQGQGQGQGQGQGQGQGQGQGR). Residues 235–244 (RLGRGVHDTD) show a composition bias toward basic and acidic residues. Composition is skewed to polar residues over residues 258 to 270 (PPYSSQGTTSDAS) and 365 to 375 (SEASPPQSSGL).

Post-translationally, degraded by the proteasome.

Its subcellular location is the nucleus. Transcription factor with important role in somitogenesis. Defines the rostrocaudal patterning of the somite by participating in distinct Notch pathways. Also regulates the FGF signaling pathway. Specifies the rostral half of the somites. Generates rostro-caudal polarity of somites by down-regulating in the presumptive rostral domain DLL1, a Notch ligand. Participates in the segment border formation by activating in the anterior presomitic mesoderm LFNG, a negative regulator of DLL1-Notch signaling. Acts as a strong suppressor of Notch activity. Together with MESP1 is involved in the epithelialization of somitic mesoderm and in the development of cardiac mesoderm. The protein is Mesoderm posterior protein 2 (MESP2) of Homo sapiens (Human).